Consider the following 911-residue polypeptide: Chitin synthase G (911 aa).

Disordered regions lie at residues 1 to 66 (MAYQ…VSGY) and 107 to 138 (GRVA…GGLR). Over residues 12–34 (PHYDDNGHRLQDLPHGSYEEEAS) the composition is skewed to basic and acidic residues. Residues 54–66 (QHGSSTTRPVSGY) are compositionally biased toward polar residues. The next 6 helical transmembrane spans lie at 579 to 599 (IFST…TTVI), 624 to 644 (IINT…FILA), 659 to 679 (SFVV…YLVV), 711 to 731 (IIII…FMYL), 840 to 860 (LVTF…SDGV), and 879 to 899 (ALLW…CWFL).

It belongs to the chitin synthase family. Class III subfamily.

It is found in the cell membrane. The catalysed reaction is [(1-&gt;4)-N-acetyl-beta-D-glucosaminyl](n) + UDP-N-acetyl-alpha-D-glucosamine = [(1-&gt;4)-N-acetyl-beta-D-glucosaminyl](n+1) + UDP + H(+). Its function is as follows. Polymerizes chitin, a structural polymer of the cell wall and septum, by transferring the sugar moiety of UDP-GlcNAc to the non-reducing end of the growing chitin polymer. In Aspergillus fumigatus (strain ATCC MYA-4609 / CBS 101355 / FGSC A1100 / Af293) (Neosartorya fumigata), this protein is Chitin synthase G (chsG).